Consider the following 206-residue polypeptide: Probable thymidylate kinase (206 aa).

G10–S17 contacts ATP.

The protein belongs to the thymidylate kinase family.

The catalysed reaction is dTMP + ATP = dTDP + ADP. The protein is Probable thymidylate kinase of Methanosarcina mazei (strain ATCC BAA-159 / DSM 3647 / Goe1 / Go1 / JCM 11833 / OCM 88) (Methanosarcina frisia).